Here is a 1225-residue protein sequence, read N- to C-terminus: Cytosolic carboxypeptidase 1 (1225 aa).

Residues 366–392 (DDVVDESDDNEDTDAETEAEAENEDSD) show a composition bias toward acidic residues. Residues 366–398 (DDVVDESDDNEDTDAETEAEAENEDSDQICKND) are disordered. A Peptidase M14 domain is found at 842–1132 (YPYTYSTLKM…KFCVGLLRLK (291 aa)). Zn(2+) contacts are provided by His-914, Glu-917, and His-1011. The active-site Proton donor/acceptor is Glu-1096. Residues 1181–1193 (YSAESNDDVDPDL) show a composition bias toward acidic residues. The disordered stretch occupies residues 1181–1225 (YSAESNDDVDPDLPENIGDFETSTLEEESFSDSEITRTHMSGQST).

It belongs to the peptidase M14 family. Zn(2+) is required as a cofactor.

It is found in the cytoplasm. It localises to the cytosol. The protein localises to the nucleus. Its subcellular location is the mitochondrion. The enzyme catalyses (L-glutamyl)(n+1)-gamma-L-glutamyl-L-glutamyl-[protein] + H2O = (L-glutamyl)(n)-gamma-L-glutamyl-L-glutamyl-[protein] + L-glutamate. It carries out the reaction C-terminal L-alpha-aminoacyl-L-glutamyl-L-glutamyl-[tubulin] + H2O = C-terminal L-alpha-aminoacyl-L-glutamyl-[tubulin] + L-glutamate. Its function is as follows. Metallocarboxypeptidase that mediates protein deglutamylation of tubulin and non-tubulin target proteins. Catalyzes the removal of polyglutamate side chains present on the gamma-carboxyl group of glutamate residues within the C-terminal tail of alpha- and beta-tubulin. Specifically cleaves tubulin long-side-chains, while it is not able to remove the branching point glutamate. Also catalyzes the removal of polyglutamate residues from the carboxy-terminus of alpha-tubulin as well as non-tubulin proteins. This Xenopus laevis (African clawed frog) protein is Cytosolic carboxypeptidase 1 (agtpbp1).